Reading from the N-terminus, the 375-residue chain is Succinyl-diaminopimelate desuccinylase (375 aa).

Residue histidine 66 participates in Zn(2+) binding. The active site involves aspartate 68. Aspartate 99 contacts Zn(2+). Residue glutamate 133 is the Proton acceptor of the active site. Residues glutamate 134, glutamate 162, and histidine 348 each contribute to the Zn(2+) site.

The protein belongs to the peptidase M20A family. DapE subfamily. As to quaternary structure, homodimer. The cofactor is Zn(2+). Co(2+) is required as a cofactor.

It catalyses the reaction N-succinyl-(2S,6S)-2,6-diaminopimelate + H2O = (2S,6S)-2,6-diaminopimelate + succinate. Its pathway is amino-acid biosynthesis; L-lysine biosynthesis via DAP pathway; LL-2,6-diaminopimelate from (S)-tetrahydrodipicolinate (succinylase route): step 3/3. Its function is as follows. Catalyzes the hydrolysis of N-succinyl-L,L-diaminopimelic acid (SDAP), forming succinate and LL-2,6-diaminopimelate (DAP), an intermediate involved in the bacterial biosynthesis of lysine and meso-diaminopimelic acid, an essential component of bacterial cell walls. The polypeptide is Succinyl-diaminopimelate desuccinylase (Salmonella choleraesuis (strain SC-B67)).